The sequence spans 205 residues: Small ribosomal subunit protein uS4 (205 aa).

The tract at residues 18-49 (NIWGRPKSPVNKREYGPGQHGQRRKGKLSDFG) is disordered. The region spanning 94-157 (RRLDTVVYRA…KQLALVLEAN (64 aa)) is the S4 RNA-binding domain.

The protein belongs to the universal ribosomal protein uS4 family. Part of the 30S ribosomal subunit. Contacts protein S5. The interaction surface between S4 and S5 is involved in control of translational fidelity.

One of the primary rRNA binding proteins, it binds directly to 16S rRNA where it nucleates assembly of the body of the 30S subunit. Functionally, with S5 and S12 plays an important role in translational accuracy. The polypeptide is Small ribosomal subunit protein uS4 (Nitrobacter hamburgensis (strain DSM 10229 / NCIMB 13809 / X14)).